A 186-amino-acid chain; its full sequence is Probable GTP-binding protein EngB (186 aa).

The region spanning 18–186 (SKKEVCLIGR…LMLKIIDVIS (169 aa)) is the EngB-type G domain. GTP is bound by residues 26–33 (GRSNVGKS), 52–56 (GRTVT), 69–72 (DLPG), 135–138 (NKID), and 166–168 (ISA). Positions 33 and 54 each coordinate Mg(2+).

The protein belongs to the TRAFAC class TrmE-Era-EngA-EngB-Septin-like GTPase superfamily. EngB GTPase family. Mg(2+) serves as cofactor.

Its function is as follows. Necessary for normal cell division and for the maintenance of normal septation. The protein is Probable GTP-binding protein EngB of Mycoplasmoides gallisepticum (strain R(low / passage 15 / clone 2)) (Mycoplasma gallisepticum).